Here is an 862-residue protein sequence, read N- to C-terminus: Protein SEY1 (862 aa).

The Cytoplasmic portion of the chain corresponds to 1–743 (MASNGHFSSV…KRSAIGGITQ (743 aa)). A GB1/RHD3-type G domain is found at 48–301 (GFNYHLISVF…IPADGFAVYA (254 aa)). Residue 58–65 (GSQSTGKS) coordinates GTP. Positions 476–500 (SDYKQELSLFQKDLEKISSQLRKDE) form a coiled coil. The chain crosses the membrane as a helical span at residues 744–764 (VPLYFYGLLLALGWNEIIAVL). Residues 765–767 (RNP) lie on the Lumenal side of the membrane. Residues 768-788 (IYFIFLLLIGVGAYVTFRLNL) form a helical membrane-spanning segment. The Cytoplasmic portion of the chain corresponds to 789–862 (WGPMINMAEA…TSDDDNDDDL (74 aa)). A disordered region spans residues 818–862 (SDSGRQAMAMSGRNARGTEEYEMSSNLKSKGRRTDTSDDDNDDDL).

The protein belongs to the TRAFAC class dynamin-like GTPase superfamily. GB1/RHD3 GTPase family. RHD3 subfamily.

It localises to the endoplasmic reticulum membrane. Cooperates with the reticulon proteins and tubule-shaping DP1 family proteins to generate and maintain the structure of the tubular endoplasmic reticulum network. Has GTPase activity, which is required for its function in ER organization. This chain is Protein SEY1, found in Arthroderma otae (strain ATCC MYA-4605 / CBS 113480) (Microsporum canis).